The following is a 161-amino-acid chain: Nucleotide-binding protein Gura_0717 (161 aa).

Belongs to the YajQ family.

Functionally, nucleotide-binding protein. This chain is Nucleotide-binding protein Gura_0717, found in Geotalea uraniireducens (strain Rf4) (Geobacter uraniireducens).